Here is a 711-residue protein sequence, read N- to C-terminus: 1,4-alpha-glucan branching enzyme GlgB (711 aa).

Aspartate 392 (nucleophile) is an active-site residue. Glutamate 443 functions as the Proton donor in the catalytic mechanism.

The protein belongs to the glycosyl hydrolase 13 family. GlgB subfamily. Monomer.

The catalysed reaction is Transfers a segment of a (1-&gt;4)-alpha-D-glucan chain to a primary hydroxy group in a similar glucan chain.. It functions in the pathway glycan biosynthesis; glycogen biosynthesis. Functionally, catalyzes the formation of the alpha-1,6-glucosidic linkages in glycogen by scission of a 1,4-alpha-linked oligosaccharide from growing alpha-1,4-glucan chains and the subsequent attachment of the oligosaccharide to the alpha-1,6 position. This Corynebacterium jeikeium (strain K411) protein is 1,4-alpha-glucan branching enzyme GlgB.